The following is a 500-amino-acid chain: L-arabinose isomerase (500 aa).

Mn(2+) contacts are provided by E306, E333, H349, and H448.

The protein belongs to the arabinose isomerase family. Mn(2+) is required as a cofactor.

The enzyme catalyses beta-L-arabinopyranose = L-ribulose. The protein operates within carbohydrate degradation; L-arabinose degradation via L-ribulose; D-xylulose 5-phosphate from L-arabinose (bacterial route): step 1/3. Functionally, catalyzes the conversion of L-arabinose to L-ribulose. The polypeptide is L-arabinose isomerase (Shewanella baltica (strain OS223)).